A 718-amino-acid chain; its full sequence is Phenylalanine--tRNA ligase beta subunit (718 aa).

The region spanning 40–153 is the tRNA-binding domain; that stretch reads FLNVSKIKFG…KADLKQDPID (114 aa). Residues 387–462 form the B5 domain; that stretch reads DKKESFNFVW…RFYGYENLVF (76 aa). Mg(2+) contacts are provided by Asp440, Asp446, Glu449, and Glu450.

It belongs to the phenylalanyl-tRNA synthetase beta subunit family. Type 1 subfamily. As to quaternary structure, tetramer of two alpha and two beta subunits. Mg(2+) serves as cofactor.

It localises to the cytoplasm. The enzyme catalyses tRNA(Phe) + L-phenylalanine + ATP = L-phenylalanyl-tRNA(Phe) + AMP + diphosphate + H(+). The polypeptide is Phenylalanine--tRNA ligase beta subunit (Mycoplasmopsis pulmonis (strain UAB CTIP) (Mycoplasma pulmonis)).